Reading from the N-terminus, the 439-residue chain is Ribosomal protein uS12 methylthiotransferase RimO (439 aa).

An MTTase N-terminal domain is found at 3 to 115; that stretch reads KKLHLISLGC…IDQMVRERQG (113 aa). [4Fe-4S] cluster contacts are provided by Cys-12, Cys-46, Cys-78, Cys-147, Cys-151, and Cys-154. One can recognise a Radical SAM core domain in the interval 133-362; sequence TGSSVHAYVK…DKIIQKQHRA (230 aa).

It belongs to the methylthiotransferase family. RimO subfamily. Requires [4Fe-4S] cluster as cofactor.

It is found in the cytoplasm. The catalysed reaction is L-aspartate(89)-[ribosomal protein uS12]-hydrogen + (sulfur carrier)-SH + AH2 + 2 S-adenosyl-L-methionine = 3-methylsulfanyl-L-aspartate(89)-[ribosomal protein uS12]-hydrogen + (sulfur carrier)-H + 5'-deoxyadenosine + L-methionine + A + S-adenosyl-L-homocysteine + 2 H(+). Its function is as follows. Catalyzes the methylthiolation of an aspartic acid residue of ribosomal protein uS12. In Wolinella succinogenes (strain ATCC 29543 / DSM 1740 / CCUG 13145 / JCM 31913 / LMG 7466 / NCTC 11488 / FDC 602W) (Vibrio succinogenes), this protein is Ribosomal protein uS12 methylthiotransferase RimO.